Reading from the N-terminus, the 427-residue chain is MYSYIVEGGFKIGGQITASGNKNSALPCILAALLTNEDVILENIPNINDVKVVLDILSDIGADIVREGNALKIKVSNIVKTEIDSSFTDLIRASILLLGPFVSRFGEIDMALPGGDVIGKRRLDTHFYGLSKLGAKLINKDGRIVLKAKKLVGAEMFLDEASVTATENIIMASVLAEGNTVIMNAACEPHVQDLCNMLNSMGANILGIGSNVLEIKGVKKLRGTTFRIGADFMQVGSLISLAALTGGELEIKKADPQHFRLIRHIYSRLGINFEYDKENVYVRDKQELKVKLDFGGHIPKIDDGPWPAFPTDLMSIIIVTATQVEGTVLVFEKMFESRMFFVDKLIKMGAQIVLCDPHRVVVTGKSPLKGNVLSSPDVRAGMSLLIAAFVAEGRSEIQNVYQIERGYEDVANKLINLGAKIKKVKSQ.

22–23 (KN) provides a ligand contact to phosphoenolpyruvate. Position 92 (R92) interacts with UDP-N-acetyl-alpha-D-glucosamine. The active-site Proton donor is the D116. Residues D312 and M334 each contribute to the UDP-N-acetyl-alpha-D-glucosamine site.

Belongs to the EPSP synthase family. MurA subfamily.

Its subcellular location is the cytoplasm. The enzyme catalyses phosphoenolpyruvate + UDP-N-acetyl-alpha-D-glucosamine = UDP-N-acetyl-3-O-(1-carboxyvinyl)-alpha-D-glucosamine + phosphate. It participates in cell wall biogenesis; peptidoglycan biosynthesis. In terms of biological role, cell wall formation. Adds enolpyruvyl to UDP-N-acetylglucosamine. The polypeptide is UDP-N-acetylglucosamine 1-carboxyvinyltransferase (Borrelia garinii subsp. bavariensis (strain ATCC BAA-2496 / DSM 23469 / PBi) (Borreliella bavariensis)).